The following is a 562-amino-acid chain: Arginine--tRNA ligase (562 aa).

Residues 129-139 (ANPTGPLHVGH) carry the 'HIGH' region motif.

It belongs to the class-I aminoacyl-tRNA synthetase family. As to quaternary structure, monomer.

It is found in the cytoplasm. It catalyses the reaction tRNA(Arg) + L-arginine + ATP = L-arginyl-tRNA(Arg) + AMP + diphosphate. The sequence is that of Arginine--tRNA ligase from Xanthomonas campestris pv. campestris (strain B100).